Here is a 108-residue protein sequence, read N- to C-terminus: UPF0102 protein Shewmr4_3685 (108 aa).

This sequence belongs to the UPF0102 family.

This Shewanella sp. (strain MR-4) protein is UPF0102 protein Shewmr4_3685.